The chain runs to 29 residues: MDIISLAWAALMVVFTFSLSLVVWGRSGL.

The helical transmembrane segment at 3 to 23 (IISLAWAALMVVFTFSLSLVV) threads the bilayer.

It belongs to the PetN family. The 4 large subunits of the cytochrome b6-f complex are cytochrome b6, subunit IV (17 kDa polypeptide, PetD), cytochrome f and the Rieske protein, while the 4 small subunits are PetG, PetL, PetM and PetN. The complex functions as a dimer.

The protein resides in the plastid. Its subcellular location is the chloroplast thylakoid membrane. Its function is as follows. Component of the cytochrome b6-f complex, which mediates electron transfer between photosystem II (PSII) and photosystem I (PSI), cyclic electron flow around PSI, and state transitions. This chain is Cytochrome b6-f complex subunit 8, found in Nicotiana tomentosiformis (Tobacco).